A 379-amino-acid chain; its full sequence is Leukocyte elastase inhibitor (379 aa).

Position 1 is an N-acetylmethionine (M1). K137 and K177 each carry N6-acetyllysine. The interval 351–379 (NFNADHPFIFFIRHNPSANILFLGRFSSP) is CARD-binding motif (CBM).

This sequence belongs to the serpin family. Ov-serpin subfamily. In terms of assembly, monomer. Interacts (via C-terminus) with CASP1; CASP4 (via CARD domain) and CASP5; these interactions regulate the activity of inflammatory caspases. Interacts with PRTN3. Interacts with GZMH. Interacts with TMSB4. Post-translationally, the N-terminus is blocked.

Its subcellular location is the secreted. The protein resides in the cytoplasm. The protein localises to the cytolytic granule. It is found in the early endosome. Neutrophil serine protease inhibitor that plays an essential role in the regulation of the innate immune response, inflammation and cellular homeostasis. Acts primarily to protect the cell from proteases released in the cytoplasm during stress or infection. These proteases are important in killing microbes but when released from granules, these potent enzymes also destroy host proteins and contribute to mortality. Regulates the activity of the neutrophil proteases elastase, cathepsin G, proteinase-3, chymase, chymotrypsin, and kallikrein-3. Also acts as a potent intracellular inhibitor of GZMH by directly blocking its proteolytic activity. During inflammation, limits the activity of inflammatory caspases CASP1, CASP4 and CASP5 by suppressing their caspase-recruitment domain (CARD) oligomerization and enzymatic activation. When secreted, promotes the proliferation of beta-cells via its protease inhibitory function. This is Leukocyte elastase inhibitor (SERPINB1) from Equus caballus (Horse).